A 372-amino-acid chain; its full sequence is 4-hydroxy-3-methylbut-2-en-1-yl diphosphate synthase (flavodoxin) (372 aa).

4 residues coordinate [4Fe-4S] cluster: cysteine 270, cysteine 273, cysteine 305, and glutamate 312.

This sequence belongs to the IspG family. [4Fe-4S] cluster is required as a cofactor.

The enzyme catalyses (2E)-4-hydroxy-3-methylbut-2-enyl diphosphate + oxidized [flavodoxin] + H2O + 2 H(+) = 2-C-methyl-D-erythritol 2,4-cyclic diphosphate + reduced [flavodoxin]. Its pathway is isoprenoid biosynthesis; isopentenyl diphosphate biosynthesis via DXP pathway; isopentenyl diphosphate from 1-deoxy-D-xylulose 5-phosphate: step 5/6. In terms of biological role, converts 2C-methyl-D-erythritol 2,4-cyclodiphosphate (ME-2,4cPP) into 1-hydroxy-2-methyl-2-(E)-butenyl 4-diphosphate. The chain is 4-hydroxy-3-methylbut-2-en-1-yl diphosphate synthase (flavodoxin) from Vibrio parahaemolyticus serotype O3:K6 (strain RIMD 2210633).